The primary structure comprises 508 residues: Photosystem II CP47 reaction center protein (508 aa).

The next 6 helical transmembrane spans lie at 21-36 (SVHIMHTALVSGWAGS), 101-115 (IVFSGLCFLAAIWHW), 140-156 (GIHLFLSGVTCFGFGAF), 203-218 (IAAGTLGILAGLFHLS), 237-252 (VLSSSIAAVFFAAFVV), and 457-472 (TFALLFFFGHIWHGAR).

This sequence belongs to the PsbB/PsbC family. PsbB subfamily. PSII is composed of 1 copy each of membrane proteins PsbA, PsbB, PsbC, PsbD, PsbE, PsbF, PsbH, PsbI, PsbJ, PsbK, PsbL, PsbM, PsbT, PsbX, PsbY, PsbZ, Psb30/Ycf12, at least 3 peripheral proteins of the oxygen-evolving complex and a large number of cofactors. It forms dimeric complexes. Requires Binds multiple chlorophylls. PSII binds additional chlorophylls, carotenoids and specific lipids. as cofactor.

It is found in the plastid. It localises to the chloroplast thylakoid membrane. Its function is as follows. One of the components of the core complex of photosystem II (PSII). It binds chlorophyll and helps catalyze the primary light-induced photochemical processes of PSII. PSII is a light-driven water:plastoquinone oxidoreductase, using light energy to abstract electrons from H(2)O, generating O(2) and a proton gradient subsequently used for ATP formation. This chain is Photosystem II CP47 reaction center protein, found in Drimys granadensis.